A 1162-amino-acid polypeptide reads, in one-letter code: DNA-directed RNA polymerase subunit beta (1162 aa).

The protein belongs to the RNA polymerase beta chain family. In terms of assembly, the RNAP catalytic core consists of 2 alpha, 1 beta, 1 beta' and 1 omega subunit. When a sigma factor is associated with the core the holoenzyme is formed, which can initiate transcription.

The catalysed reaction is RNA(n) + a ribonucleoside 5'-triphosphate = RNA(n+1) + diphosphate. Its function is as follows. DNA-dependent RNA polymerase catalyzes the transcription of DNA into RNA using the four ribonucleoside triphosphates as substrates. This is DNA-directed RNA polymerase subunit beta from Clavibacter sepedonicus (Clavibacter michiganensis subsp. sepedonicus).